Reading from the N-terminus, the 343-residue chain is N-acetyl-gamma-glutamyl-phosphate reductase (343 aa).

Cys-147 is a catalytic residue.

Belongs to the NAGSA dehydrogenase family. Type 1 subfamily.

It localises to the cytoplasm. The catalysed reaction is N-acetyl-L-glutamate 5-semialdehyde + phosphate + NADP(+) = N-acetyl-L-glutamyl 5-phosphate + NADPH + H(+). It functions in the pathway amino-acid biosynthesis; L-arginine biosynthesis; N(2)-acetyl-L-ornithine from L-glutamate: step 3/4. Catalyzes the NADPH-dependent reduction of N-acetyl-5-glutamyl phosphate to yield N-acetyl-L-glutamate 5-semialdehyde. The protein is N-acetyl-gamma-glutamyl-phosphate reductase of Listeria monocytogenes serotype 4b (strain CLIP80459).